A 133-amino-acid chain; its full sequence is Ribonuclease P protein component (133 aa).

This sequence belongs to the RnpA family. In terms of assembly, consists of a catalytic RNA component (M1 or rnpB) and a protein subunit.

The catalysed reaction is Endonucleolytic cleavage of RNA, removing 5'-extranucleotides from tRNA precursor.. In terms of biological role, RNaseP catalyzes the removal of the 5'-leader sequence from pre-tRNA to produce the mature 5'-terminus. It can also cleave other RNA substrates such as 4.5S RNA. The protein component plays an auxiliary but essential role in vivo by binding to the 5'-leader sequence and broadening the substrate specificity of the ribozyme. This Pseudomonas savastanoi pv. phaseolicola (strain 1448A / Race 6) (Pseudomonas syringae pv. phaseolicola (strain 1448A / Race 6)) protein is Ribonuclease P protein component.